The primary structure comprises 535 residues: T-complex protein 1 subunit zeta (535 aa).

This sequence belongs to the TCP-1 chaperonin family. In terms of assembly, heterooligomeric complex of about 850 to 900 kDa that forms two stacked rings, 12 to 16 nm in diameter.

The protein resides in the cytoplasm. Its function is as follows. Molecular chaperone; assists the folding of proteins upon ATP hydrolysis. Known to play a role, in vitro, in the folding of actin and tubulin. This is T-complex protein 1 subunit zeta (cct6) from Schizosaccharomyces pombe (strain 972 / ATCC 24843) (Fission yeast).